We begin with the raw amino-acid sequence, 127 residues long: Cuticle protein 4 (127 aa).

The residue at position 1 (glutamine 1) is a Pyrrolidone carboxylic acid. Repeat copies occupy residues 31–39 (PADTKKAEI) and 84–92 (PADTKKAEI).

This is Cuticle protein 4 from Blaberus craniifer (Death's head cockroach).